The sequence spans 344 residues: Heat-inducible transcription repressor HrcA (344 aa).

The protein belongs to the HrcA family.

Functionally, negative regulator of class I heat shock genes (grpE-dnaK-dnaJ and groELS operons). Prevents heat-shock induction of these operons. The protein is Heat-inducible transcription repressor HrcA of Streptococcus pneumoniae serotype 19F (strain G54).